We begin with the raw amino-acid sequence, 638 residues long: Threonine--tRNA ligase (638 aa).

The TGS domain occupies 1 to 61; that stretch reads MPVITLPDGS…SVDGKLQIIT (61 aa). Residues 243-534 form a catalytic region; sequence DHRKIGKTQD…LTEEYAGFFP (292 aa). Residues Cys-334, His-385, and His-511 each contribute to the Zn(2+) site.

This sequence belongs to the class-II aminoacyl-tRNA synthetase family. As to quaternary structure, homodimer. Zn(2+) serves as cofactor.

It is found in the cytoplasm. It carries out the reaction tRNA(Thr) + L-threonine + ATP = L-threonyl-tRNA(Thr) + AMP + diphosphate + H(+). Catalyzes the attachment of threonine to tRNA(Thr) in a two-step reaction: L-threonine is first activated by ATP to form Thr-AMP and then transferred to the acceptor end of tRNA(Thr). Also edits incorrectly charged L-seryl-tRNA(Thr). This is Threonine--tRNA ligase from Hamiltonella defensa subsp. Acyrthosiphon pisum (strain 5AT).